Reading from the N-terminus, the 479-residue chain is Sulfate adenylyltransferase subunit 1 (479 aa).

A tr-type G domain is found at Lys25–Arg239. The tract at residues Gly34–Ser41 is G1. GTP is bound at residue Gly34–Ser41. The tract at residues Gly92–Asp96 is G2. Residues Asp113 to Gly116 are G3. GTP-binding positions include Asp113 to His117 and Asn168 to Asp171. Residues Asn168 to Asp171 form a G4 region. The tract at residues Ser206–Leu208 is G5.

Belongs to the TRAFAC class translation factor GTPase superfamily. Classic translation factor GTPase family. CysN/NodQ subfamily. Heterodimer composed of CysD, the smaller subunit, and CysN.

The catalysed reaction is sulfate + ATP + H(+) = adenosine 5'-phosphosulfate + diphosphate. It participates in sulfur metabolism; hydrogen sulfide biosynthesis; sulfite from sulfate: step 1/3. Functionally, with CysD forms the ATP sulfurylase (ATPS) that catalyzes the adenylation of sulfate producing adenosine 5'-phosphosulfate (APS) and diphosphate, the first enzymatic step in sulfur assimilation pathway. APS synthesis involves the formation of a high-energy phosphoric-sulfuric acid anhydride bond driven by GTP hydrolysis by CysN coupled to ATP hydrolysis by CysD. The protein is Sulfate adenylyltransferase subunit 1 of Salmonella gallinarum (strain 287/91 / NCTC 13346).